Consider the following 478-residue polypeptide: MKKILFVASESVPFIKTDGLADVVGSLPKYINKNNFDIRVILPNYMSIPRQWKEKMLYRTHFYMNLNWRTQYVGVLEYQYEGIWYYFIDNEFYFAGNKPYGNIYEDIEKFAFLSKAVLTCLPVLDFRPDIIHCHDWQTGLVPVFLHDSFQKNEFYHGIKTIMTIHNLKFQGVWDKKTVQDITALSEYYFSPDKLETYGDANYLKGGIVFSDYITTVSDTYAHDITMPFYGEGLDGLMRARSDCLCGIVNGIDYEEYNPEFDPFINKPYNAKNFRKEKIKNKRALQQELGLAKDDKAFMIGIVSRLIDQNGLDLIDCVMEDICAEDTQLIILGTGKDRYENLFRHYARKYSSRVSANIFYSNEQSHKIYAACDAFLMPSLFEPCGLSQLMSLRYGTVPIVRETGGLVDTVEPYNQHESTGTGFTFKNYNAHEMLYTIRFAKEIYQDKKREWNKIIDRGMAKDFSWKTSARKYEELYESL.

Lys16 contacts ADP-alpha-D-glucose.

Belongs to the glycosyltransferase 1 family. Bacterial/plant glycogen synthase subfamily.

It carries out the reaction [(1-&gt;4)-alpha-D-glucosyl](n) + ADP-alpha-D-glucose = [(1-&gt;4)-alpha-D-glucosyl](n+1) + ADP + H(+). It functions in the pathway glycan biosynthesis; glycogen biosynthesis. Synthesizes alpha-1,4-glucan chains using ADP-glucose. The chain is Glycogen synthase from Lachnoclostridium phytofermentans (strain ATCC 700394 / DSM 18823 / ISDg) (Clostridium phytofermentans).